The chain runs to 1212 residues: Nucleolar protein 6 (1212 aa).

Disordered regions lie at residues 1–72 (MGKI…PVSI) and 1156–1212 (KREQ…KSLS). The segment covering 1197 to 1212 (LKRKSLIKSRPLKSLS) has biased composition (basic residues).

The protein belongs to the NRAP family. Part of the small subunit (SSU) processome, composed of more than 70 proteins and the RNA chaperone small nucleolar RNA (snoRNA) U3.

It localises to the nucleus. The protein localises to the nucleolus. Its subcellular location is the chromosome. Functionally, part of the small subunit (SSU) processome, first precursor of the small eukaryotic ribosomal subunit. During the assembly of the SSU processome in the nucleolus, many ribosome biogenesis factors, an RNA chaperone and ribosomal proteins associate with the nascent pre-rRNA and work in concert to generate RNA folding, modifications, rearrangements and cleavage as well as targeted degradation of pre-ribosomal RNA by the RNA exosome. The chain is Nucleolar protein 6 from Drosophila pseudoobscura pseudoobscura (Fruit fly).